A 171-amino-acid polypeptide reads, in one-letter code: Protein X (171 aa).

The next 3 helical transmembrane spans lie at 11 to 31, 38 to 58, and 73 to 93; these read SWYQ…IYSL, LAGI…VYLM, and AVIA…WLVI.

The protein localises to the virion membrane. The polypeptide is Protein X (VPX) (Mus musculus domesticus (western European house mouse)).